We begin with the raw amino-acid sequence, 356 residues long: 5-formaminoimidazole-4-carboxamide-1-(beta)-D-ribofuranosyl 5'-monophosphate synthetase 1 (356 aa).

Positions 27 and 94 each coordinate 5-amino-1-(5-phospho-beta-D-ribosyl)imidazole-4-carboxamide. Residues 101 to 333 (TENFAEMAVP…YADLIQEDLS (233 aa)) form the ATP-grasp domain. Residues 145 to 196 (PRDI…TRYY) and Glu-226 each bind ATP. Asn-255 is a binding site for 5-amino-1-(5-phospho-beta-D-ribosyl)imidazole-4-carboxamide. Positions 293 and 306 each coordinate Mg(2+).

This sequence belongs to the phosphohexose mutase family. Mg(2+) serves as cofactor. Mn(2+) is required as a cofactor.

It carries out the reaction 5-amino-1-(5-phospho-beta-D-ribosyl)imidazole-4-carboxamide + formate + ATP = 5-formamido-1-(5-phospho-D-ribosyl)imidazole-4-carboxamide + ADP + phosphate. The protein operates within purine metabolism; IMP biosynthesis via de novo pathway; 5-formamido-1-(5-phospho-D-ribosyl)imidazole-4-carboxamide from 5-amino-1-(5-phospho-D-ribosyl)imidazole-4-carboxamide (formate route): step 1/1. Its function is as follows. Catalyzes the ATP- and formate-dependent formylation of 5-aminoimidazole-4-carboxamide-1-beta-d-ribofuranosyl 5'-monophosphate (AICAR) to 5-formaminoimidazole-4-carboxamide-1-beta-d-ribofuranosyl 5'-monophosphate (FAICAR) in the absence of folates. This chain is 5-formaminoimidazole-4-carboxamide-1-(beta)-D-ribofuranosyl 5'-monophosphate synthetase 1, found in Methanosarcina mazei (strain ATCC BAA-159 / DSM 3647 / Goe1 / Go1 / JCM 11833 / OCM 88) (Methanosarcina frisia).